Reading from the N-terminus, the 208-residue chain is MASKCPKCDKTVYFAEKVSSLGKDWHKFCLKCERCSKTLTPGGHAEHDGKPFCHKPCYATLFGPKGVNIGGAGSYIYEKPLAEGPQVTGPIEVPAARAEERKASGPPKGPSRASSVTTFTGEPNTCPRCSKKVYFAEKVTSLGKDWHRPCLRCERCGKTLTPGGHAEHDGQPYCHKPCYGILFGPKGVNTGAVGSYIYDRDPEGKVQP.

Residues 5–57 form the LIM zinc-binding 1 domain; that stretch reads CPKCDKTVYFAEKVSSLGKDWHKFCLKCERCSKTLTPGGHAEHDGKPFCHKPC. K23 carries the N6-acetyllysine modification. The disordered stretch occupies residues 98–119; that stretch reads AEERKASGPPKGPSRASSVTTF. S104 is subject to Phosphoserine. The LIM zinc-binding 2 domain occupies 126-178; sequence CPRCSKKVYFAEKVTSLGKDWHRPCLRCERCGKTLTPGGHAEHDGQPYCHKPC. N6-acetyllysine occurs at positions 138 and 144.

In terms of assembly, interacts with TGFB1I1. As to expression, widespread tissue expression; highest levels in the heart.

This is Cysteine-rich protein 2 (CRIP2) from Homo sapiens (Human).